A 61-amino-acid chain; its full sequence is Temporin-ALj (61 aa).

Positions 1–22 (MFTLKKSLLLLFFLATINLSFC) are cleaved as a signal peptide. Positions 23–46 (EQERNAEEERRDEPDERNAEVEKR) are excised as a propeptide. Leucine 59 is modified (leucine amide).

This sequence belongs to the frog skin active peptide (FSAP) family. Temporin subfamily. Expressed by the skin glands.

The protein resides in the secreted. Its function is as follows. Antimicrobial peptide with activity against Gram-positive and Gram-negative bacteria and against fungi. Has been tested against S.aureus (MIC=7.5 ug/mL), B.pumilus (MIC=15.0 ug/mL), B.cereus (MIC=75.0 ug/mL), E.coli (MIC=15.0 ug/mL), B.dysenteriae (MIC=30.0 ug/mL), A.cacoaceticus (MIC=60.0 ug/mL), P.aeruginosa (MIC=7.5 ug/mL) and C.albicans (MIC=5.0 ug/mL). Also shows a weak hemolytic activity. The protein is Temporin-ALj of Amolops loloensis (Lolokou Sucker Frog).